The primary structure comprises 149 residues: Large ribosomal subunit protein bL9 (149 aa).

It belongs to the bacterial ribosomal protein bL9 family.

Its function is as follows. Binds to the 23S rRNA. This Campylobacter curvus (strain 525.92) protein is Large ribosomal subunit protein bL9.